Consider the following 130-residue polypeptide: Lysozyme C (130 aa).

The 130-residue stretch at 1–130 (KVWERCALAR…VEQYVEGCDL (130 aa)) folds into the C-type lysozyme domain. Disulfide bonds link Cys6–Cys128, Cys30–Cys116, Cys65–Cys81, and Cys77–Cys95. Catalysis depends on residues Glu35 and Asp53.

It belongs to the glycosyl hydrolase 22 family. Monomer.

It catalyses the reaction Hydrolysis of (1-&gt;4)-beta-linkages between N-acetylmuramic acid and N-acetyl-D-glucosamine residues in a peptidoglycan and between N-acetyl-D-glucosamine residues in chitodextrins.. In terms of biological role, lysozymes have primarily a bacteriolytic function; those in tissues and body fluids are associated with the monocyte-macrophage system and enhance the activity of immunoagents. This Camelus dromedarius (Dromedary) protein is Lysozyme C (LYZ).